Here is a 374-residue protein sequence, read N- to C-terminus: Low-specificity L-threonine aldolase (374 aa).

K213 carries the post-translational modification N6-(pyridoxal phosphate)lysine. A disordered region spans residues 354 to 374 (HPHKDDGRNNKKMYSLDAIKK).

Belongs to the threonine aldolase family. In terms of assembly, homotetramer. Requires pyridoxal 5'-phosphate as cofactor.

The enzyme catalyses L-threonine = acetaldehyde + glycine. It carries out the reaction L-allo-threonine = acetaldehyde + glycine. Its pathway is amino-acid degradation; L-threonine degradation via aldolase pathway; acetaldehyde and glycine from L-threonine: step 1/1. The chain is Low-specificity L-threonine aldolase (GLY1) from Candida albicans (Yeast).